A 57-amino-acid chain; its full sequence is MLKVKLVRSMIGCNPKQRATIKALGLRKIRQEKSFEDTPIVRGMIKKVEHLVEVSES.

It belongs to the universal ribosomal protein uL30 family. In terms of assembly, part of the 50S ribosomal subunit.

This chain is Large ribosomal subunit protein uL30, found in Maridesulfovibrio salexigens (strain ATCC 14822 / DSM 2638 / NCIMB 8403 / VKM B-1763) (Desulfovibrio salexigens).